The sequence spans 681 residues: DNA ligase (681 aa).

NAD(+) contacts are provided by residues 35 to 39 (DAEYD), 84 to 85 (SL), and glutamate 115. The active-site N6-AMP-lysine intermediate is lysine 117. NAD(+) contacts are provided by arginine 138, glutamate 175, lysine 293, and lysine 317. Zn(2+)-binding residues include cysteine 411, cysteine 414, cysteine 429, and cysteine 435. In terms of domain architecture, BRCT spans 598-681 (RTNLAVPGKT…SLLRDTSSSE (84 aa)).

This sequence belongs to the NAD-dependent DNA ligase family. LigA subfamily. Mg(2+) is required as a cofactor. Mn(2+) serves as cofactor.

The catalysed reaction is NAD(+) + (deoxyribonucleotide)n-3'-hydroxyl + 5'-phospho-(deoxyribonucleotide)m = (deoxyribonucleotide)n+m + AMP + beta-nicotinamide D-nucleotide.. In terms of biological role, DNA ligase that catalyzes the formation of phosphodiester linkages between 5'-phosphoryl and 3'-hydroxyl groups in double-stranded DNA using NAD as a coenzyme and as the energy source for the reaction. It is essential for DNA replication and repair of damaged DNA. The protein is DNA ligase of Nitrosomonas europaea (strain ATCC 19718 / CIP 103999 / KCTC 2705 / NBRC 14298).